The chain runs to 218 residues: Methylthioribulose-1-phosphate dehydratase (218 aa).

Residues His-107 and His-109 each coordinate Zn(2+).

Belongs to the aldolase class II family. MtnB subfamily. The cofactor is Zn(2+).

It carries out the reaction 5-(methylsulfanyl)-D-ribulose 1-phosphate = 5-methylsulfanyl-2,3-dioxopentyl phosphate + H2O. Its pathway is amino-acid biosynthesis; L-methionine biosynthesis via salvage pathway; L-methionine from S-methyl-5-thio-alpha-D-ribose 1-phosphate: step 2/6. Catalyzes the dehydration of methylthioribulose-1-phosphate (MTRu-1-P) into 2,3-diketo-5-methylthiopentyl-1-phosphate (DK-MTP-1-P). This Xylella fastidiosa (strain 9a5c) protein is Methylthioribulose-1-phosphate dehydratase.